Here is a 211-residue protein sequence, read N- to C-terminus: Troponin I, cardiac muscle (211 aa).

The disordered stretch occupies residues 1-23; that stretch reads MADESGDAAGCPPPAPAPIRRQS. At Ala-2 the chain carries N-acetylalanine. Ser-5 carries the post-translational modification Phosphoserine. Residues Ser-23 and Ser-24 each carry the phosphoserine; by PKA and PKD/PRKD1 modification. The residue at position 27 (Tyr-27) is a Phosphotyrosine. Thr-32 is modified (phosphothreonine; by STK4/MST1). Positions 33 to 80 are involved in binding TNC; sequence EPHAKKKSKISASRKLQLKTLMLQIAKQELEREAEERRGEKGRALSTR. 2 positions are modified to phosphoserine; by PKC/PRKCE: Ser-43 and Ser-45. Thr-52 is subject to Phosphothreonine; by STK4/MST1. Position 78 is a phosphoserine (Ser-78). At Thr-79 the chain carries Phosphothreonine. Residues Thr-130 and Thr-144 each carry the phosphothreonine; by STK4/MST1 modification. The interval 130-150 is involved in binding TNC and actin; sequence TQKIFDLRGKFKRPTLRRVRI. Ser-151 is modified (phosphoserine; by PAK3). The residue at position 167 (Ser-167) is a Phosphoserine. The residue at position 182 (Thr-182) is a Phosphothreonine. Ser-200 bears the Phosphoserine mark.

The protein belongs to the troponin I family. Binds to actin and tropomyosin. Interacts with TRIM63. Interacts with STK4/MST1. Post-translationally, phosphorylated at Ser-23 and Ser-24 by PRKD1; phosphorylation reduces myofilament calcium sensitivity. Phosphorylated preferentially at Thr-32. Phosphorylation by STK4/MST1 alters its binding affinity to TNNC1 (cardiac Tn-C) and TNNT2 (cardiac Tn-T). Phosphorylated at Ser-43 and Ser-45 by PRKCE; phosphorylation increases myocardium contractile dysfunction.

Its function is as follows. Troponin I is the inhibitory subunit of troponin, the thin filament regulatory complex which confers calcium-sensitivity to striated muscle actomyosin ATPase activity. The chain is Troponin I, cardiac muscle (TNNI3) from Canis lupus familiaris (Dog).